A 320-amino-acid polypeptide reads, in one-letter code: Putative S-adenosyl-L-methionine-dependent methyltransferase MAP_4078 (320 aa).

S-adenosyl-L-methionine contacts are provided by residues D132 and 161-162 (DL). The segment at 294–320 (PPHDIEDAIPQTRFVAAQRTERTRPDR) is disordered.

The protein belongs to the UPF0677 family.

In terms of biological role, exhibits S-adenosyl-L-methionine-dependent methyltransferase activity. The sequence is that of Putative S-adenosyl-L-methionine-dependent methyltransferase MAP_4078 from Mycolicibacterium paratuberculosis (strain ATCC BAA-968 / K-10) (Mycobacterium paratuberculosis).